We begin with the raw amino-acid sequence, 332 residues long: Ferredoxin--NADP reductase (332 aa).

FAD contacts are provided by threonine 20, glutamate 39, glutamine 47, tyrosine 52, valine 92, phenylalanine 126, aspartate 288, and threonine 329.

The protein belongs to the ferredoxin--NADP reductase type 2 family. Homodimer. FAD is required as a cofactor.

It carries out the reaction 2 reduced [2Fe-2S]-[ferredoxin] + NADP(+) + H(+) = 2 oxidized [2Fe-2S]-[ferredoxin] + NADPH. In Geobacillus kaustophilus (strain HTA426), this protein is Ferredoxin--NADP reductase.